Reading from the N-terminus, the 197-residue chain is Signal peptidase complex catalytic subunit SEC11 (197 aa).

At 1–14 (MLSSLAPYMANPRQ) the chain is on the cytoplasmic side. Residues 15–33 (TLTQVLNFALVLSTAFMLW) form a helical; Signal-anchor for type II membrane protein membrane-spanning segment. Residues 34-197 (KGLSVVTNST…MGLMVVLQRE (164 aa)) lie on the Lumenal side of the membrane. N41 carries an N-linked (GlcNAc...) asparagine glycan. Catalysis depends on charge relay system residues S53 and H92. Over residues 102–115 (PGREDKKSVKKGGE) the composition is skewed to basic and acidic residues. The interval 102 to 134 (PGREDKKSVKKGGEEGEETSSTPSQKLLTKGDN) is disordered. The active-site Charge relay system is the D139. The interval 183–194 (VLLGFMGLMVVL) is C-terminal short (CTS) helix.

It belongs to the peptidase S26B family. In terms of assembly, component of the signal peptidase complex (SPC) composed of a catalytic subunit SEC11 and three accessory subunits SPC1, SPC2 and SPC3. The complex induces a local thinning of the ER membrane which is used to measure the length of the signal peptide (SP) h-region of protein substrates. This ensures the selectivity of the complex towards h-regions shorter than 18-20 amino acids. SPC associates with the translocon complex.

It is found in the endoplasmic reticulum membrane. It catalyses the reaction Cleavage of hydrophobic, N-terminal signal or leader sequences from secreted and periplasmic proteins.. Functionally, catalytic component of the signal peptidase complex (SPC) which catalyzes the cleavage of N-terminal signal sequences from nascent proteins as they are translocated into the lumen of the endoplasmic reticulum. Specifically cleaves N-terminal signal peptides that contain a hydrophobic alpha-helix (h-region) shorter than 18-20 amino acids. The chain is Signal peptidase complex catalytic subunit SEC11 (SEC11) from Paracoccidioides lutzii (strain ATCC MYA-826 / Pb01) (Paracoccidioides brasiliensis).